We begin with the raw amino-acid sequence, 469 residues long: 3-isopropylmalate dehydratase large subunit (469 aa).

3 residues coordinate [4Fe-4S] cluster: cysteine 350, cysteine 410, and cysteine 413.

The protein belongs to the aconitase/IPM isomerase family. LeuC type 1 subfamily. In terms of assembly, heterodimer of LeuC and LeuD. The cofactor is [4Fe-4S] cluster.

It catalyses the reaction (2R,3S)-3-isopropylmalate = (2S)-2-isopropylmalate. Its pathway is amino-acid biosynthesis; L-leucine biosynthesis; L-leucine from 3-methyl-2-oxobutanoate: step 2/4. Functionally, catalyzes the isomerization between 2-isopropylmalate and 3-isopropylmalate, via the formation of 2-isopropylmaleate. The chain is 3-isopropylmalate dehydratase large subunit from Brucella abortus (strain S19).